The primary structure comprises 168 residues: Protein C2-DOMAIN ABA-RELATED 1 (168 aa).

N-acetylmethionine is present on methionine 1. The region spanning 1–104 (MENLVGLLRI…EAIKFAHQLG (104 aa)) is the C2 domain. Residues arginine 21, aspartate 22, aspartate 27, aspartate 73, tyrosine 74, aspartate 75, and aspartate 81 each coordinate Ca(2+).

Belongs to the plant CAR protein family. In terms of assembly, dimers and oligomers. Binds to PYR/PYL/RCAR abscisic acid intracellular receptors in an ABA-independent manner, both at the plasma membrane and in the nucleus. Interacts directly with PYR1, PYL1, PYL4, PYL6 and PYL8. Binds phospholipids in a Ca(2+)-dependent manner. Requires Ca(2+) as cofactor. As to expression, expressed in roots.

It is found in the cell membrane. The protein resides in the nucleus. Stimulates the GTPase/ATPase activities of Obg-like ATPases. Mediates the transient calcium-dependent interaction of PYR/PYL/RCAR abscisic acid (ABA) receptors with the plasma membrane and thus regulates ABA sensitivity. Binds liposomes in the absence of exogenous Ca(2+), but this activity is enhanced in the presence of Ca(2+) and generates membrane curvature. This chain is Protein C2-DOMAIN ABA-RELATED 1, found in Arabidopsis thaliana (Mouse-ear cress).